Here is a 515-residue protein sequence, read N- to C-terminus: Alpha-1B adrenergic receptor (515 aa).

The Extracellular segment spans residues methionine 1 to alanine 45. N-linked (GlcNAc...) asparagine glycosylation is found at asparagine 10, asparagine 24, and asparagine 34. A helical transmembrane segment spans residues isoleucine 46–valine 70. Over alanine 71 to phenylalanine 83 the chain is Cytoplasmic. Residues isoleucine 84–leucine 105 traverse the membrane as a helical segment. Over glutamate 106–arginine 115 the chain is Extracellular. Residues isoleucine 116–isoleucine 141 form a helical membrane-spanning segment. A disulfide bridge links cysteine 118 with cysteine 195. Residues aspartate 142–lysine 161 are Cytoplasmic-facing. Residues alanine 162 to leucine 182 form a helical membrane-spanning segment. Residues glycine 183–proline 201 are Extracellular-facing. Residues phenylalanine 202–cysteine 224 form a helical membrane-spanning segment. Topologically, residues arginine 225–threonine 295 are cytoplasmic. Threonine 264 is modified (phosphothreonine). Residues leucine 296–leucine 319 form a helical membrane-spanning segment. Residues phenylalanine 320–proline 326 are Extracellular-facing. The helical transmembrane segment at aspartate 327–serine 351 threads the bilayer. The Cytoplasmic portion of the chain corresponds to serine 352–phenylalanine 515. Cysteine 365 carries S-palmitoyl cysteine lipidation. The short motif at arginine 368–arginine 378 is the Nuclear localization signal element. 2 disordered regions span residues glycine 392 to glycine 430 and leucine 474 to phenylalanine 515. 2 stretches are compositionally biased toward polar residues: residues serine 410 to proline 424 and glycine 484 to alanine 498.

This sequence belongs to the G-protein coupled receptor 1 family. Adrenergic receptor subfamily. ADRA1B sub-subfamily. As to quaternary structure, homo- and heterooligomer. Heterooligomerizes with ADRA1B homooligomers in cardiac myocytes. Interacts with CAVIN4.

The protein localises to the nucleus membrane. It is found in the cell membrane. It localises to the cytoplasm. The protein resides in the membrane. Its subcellular location is the caveola. In terms of biological role, this alpha-adrenergic receptor mediates its action by association with G proteins that activate a phosphatidylinositol-calcium second messenger system. Its effect is mediated by G(q) and G(11) proteins. Nuclear ADRA1A-ADRA1B heterooligomers regulate phenylephrine (PE)-stimulated ERK signaling in cardiac myocytes. This is Alpha-1B adrenergic receptor (Adra1b) from Rattus norvegicus (Rat).